The sequence spans 983 residues: MSTDKKKEEVPKPETEDLTVKDETKNKDKKKANEEEELSEEDQKLKGDLEMLVQTLLEDDSKLYETTLTQLKEFIKNSTSSMTAVPKPLKFLRPFYPDLCKAYDKWSDKDQKSSLADMLSVLAMTYSDTHQHDSLRFRLLSDTSNIASWGHEYVRHLALEIGEVYNEQVEKEAEDNSTSTESSPQPPHMNFEFSKDVILQLSLEIVPYFMKHNGEEDAVDLLLEIEAIEKLPQFVDENTYKRVCQYMIACVQLLPPPEDISFLQTAYSIYLSELQLPEALSLAIRLGNEDMIRSVFDATSDPIVHQQLAYILAAQRVPFEHPELQEIIGNTKLSEHFLYLAKELNLLTPKIPEDIYKSHLDSSKSVFSSAGLDSAQQNLAASFVNAFLNLGYCNDKMITDNDNWVYKTKGDGMTSAVASIGSIYQWNIDGLQQLDKYLYVDEPEVKAGGLLGIGIASAGVHHDVEPALLLLQEYINHSDTKISTAAILGIGIAFAGSKNDEVLGLLLPVVSNTENSLELAAIAALALSHVFVGTCNGDITTAVMDNFLERTPLELKSEWARFLALSLGLLYLGQGEHVDDVLETINAIEHPMTSAIEVLISSCAYTATGDVLLVQDLLHRLTPKAVKSSDEDEDEDNEELSQEDMNGISAFLGKKENEIAEEPQGNEGADNEMEVDSHQDETTTGENNVKKEENEEEKTEKSEKTENDEEEEDEEESKDEGANDELAYAVIGIALITMGEEIGKEMSLRHFGHLMHYGNEHIRRMVPLAMGLVSVADPQMKVFDTLTRFSHDPDLDVSMNSIFAMGLCGVGTNNARLAQLLRQLASYYSREQDALFITRLAQGLVHLGKGTMTMDIFNDAHVLNKVTLASLLTVLVGLISPSFILKHHQLFYMLNSGVRPKFIITLNEEGEQIKVNVRIGQAVETVGQAGKPKTITGWITQSTPVLLGHGERAELENDEYISYTNNIEGVVILKKNPNFQEEE.

Positions 1–26 are enriched in basic and acidic residues; that stretch reads MSTDKKKEEVPKPETEDLTVKDETKN. Disordered regions lie at residues 1-44 and 169-188; these read MSTD…EDQK and VEKE…QPPH. 5 PC repeats span residues 415–447, 448–484, 485–519, 520–557, and 563–595; these read SAVA…EVKA, GGLL…KIST, AAIL…SLEL, AAIA…ELKS, and LALS…MTSA. 2 disordered regions span residues 625-644 and 662-724; these read AVKS…SQED and EPQG…GAND. Acidic residues predominate over residues 630–642; sequence DEDEDEDNEELSQ. Basic and acidic residues predominate over residues 688-705; that stretch reads NVKKEENEEEKTEKSEKT. The span at 706 to 718 shows a compositional bias: acidic residues; it reads ENDEEEEDEEESK. PC repeat units lie at residues 768–799 and 800–834; these read LAMG…DVSM and NSIF…EQDA.

Belongs to the proteasome subunit S2 family.

Acts as a regulatory subunit of the 26 proteasome which is involved in the ATP-dependent degradation of ubiquitinated proteins. The chain is 26S proteasome regulatory subunit RPN1 (RPN1) from Candida glabrata (strain ATCC 2001 / BCRC 20586 / JCM 3761 / NBRC 0622 / NRRL Y-65 / CBS 138) (Yeast).